The primary structure comprises 446 residues: MRKYFGTDGIRGRANGVITPELALKVGQAAGLLFQRGDHRHRVVIGKDTRLSGYMIETALVAGFTSVGMDVLLLGPMPTPAVAMLTRSMRADIGVMISASHNPYEDNGIKLFGPDGFKLSDEVEHEIERLLDADLQKRLSGSADLGRAKRIESVHARYIEFAKRTLPRSITLEGLRVVVDCANGAAYRVAPETLWELGAEVIAIGTEPDGFNINRDVGSTAPDALVRKVRELRADIGIALDGDADRVLVVDEKGQRVDGDQLMAVVARSWKEDQRLTQPGIVATIMSNLGLERYLGELGLGLVRTAVGDRYVLEYMREHGYNLGGEQSGHIIMSDYATTGDGLVAALQLLTVVQRQQRPVSEVCHCFDPLPQVLKNVRYRAGEPLRQDSVVTAIEGARQRLGNAGRLVIRPSGTEPVIRVMAEGDNRDLVVEVVDEVVEALRQAAA.

Ser100 serves as the catalytic Phosphoserine intermediate. Positions 100, 241, 243, and 245 each coordinate Mg(2+). Ser100 carries the phosphoserine modification.

The protein belongs to the phosphohexose mutase family. Mg(2+) is required as a cofactor. Activated by phosphorylation.

The catalysed reaction is alpha-D-glucosamine 1-phosphate = D-glucosamine 6-phosphate. Functionally, catalyzes the conversion of glucosamine-6-phosphate to glucosamine-1-phosphate. The sequence is that of Phosphoglucosamine mutase from Methylobacterium sp. (strain 4-46).